Consider the following 822-residue polypeptide: Adhesion G protein-coupled receptor E2 (822 aa).

A signal peptide spans 1–18 (MGGRVFLAFCVWLTLLGA). Residues 19-530 (ETQDSRDCAR…DVQEEDPVLT (512 aa)) lie on the Extracellular side of the membrane. Residues 22–63 (DSRDCARWCPENSSCVNATACRCNPGFSSSSEIFTSPTEICD) form the EGF-like 1 domain. Intrachain disulfides connect Cys26–Cys36, Cys30–Cys42, Cys44–Cys62, Cys68–Cys82, and Cys76–Cys91. N-linked (GlcNAc...) asparagine glycosylation is found at Asn33 and Asn38. Positions 64–103 (DINECVPPSKVSCGKSSDCRNTEGSYDCVCNPGYELVSGA) constitute an EGF-like 1; calcium-binding domain. The N-linked (GlcNAc...) asparagine glycan is linked to Asn108. The region spanning 116–159 (DVDECQQNPRLCKSYGTCVNTLGSFTCQCLPGFKFKPEDPKLCT) is the EGF-like 2; calcium-binding domain. 5 disulfides stabilise this stretch: Cys120-Cys133, Cys127-Cys142, Cys144-Cys158, Cys164-Cys177, and Cys171-Cys186. The region spanning 160-198 (DVNECTSGQNPCHSSTHCLNNVGSYQCRCRPGWQPIPGS) is the EGF-like 3; calcium-binding domain. Residues Asn203, Asn222, Asn351, Asn371, Asn427, Asn449, and Asn453 are each glycosylated (N-linked (GlcNAc...) asparagine). Residues 209 to 247 (DVDECSSGLHQCDNSTVCFNTVGSYTCRCRPGWEPKHGI) form the EGF-like 4; calcium-binding domain. Cystine bridges form between Cys213/Cys226 and Cys220/Cys235. The region spanning 351-523 (NFSYPAGTEF…AVLMAPYDVQ (173 aa)) is the GAIN-B domain. 2 disulfide bridges follow: Cys475–Cys505 and Cys493–Cys507. Positions 475–523 (CVFWEHGQNGCGHWATTGCSTMDTRDTSTICRCTHLSSFAVLMAPYDVQ) are GPS. Residues 531–551 (VITYMGLSLSLLCLLLAALTF) form a helical membrane-spanning segment. Over 552–562 (LLCKAIQNIST) the chain is Cytoplasmic. A helical transmembrane segment spans residues 563-583 (SLHLQLSLCLLLAHLLFLVAI). At 584-589 (DRTEHE) the chain is on the extracellular side. The helical transmembrane segment at 590–610 (VLCAIIASALHYLYLAAFTWM) threads the bilayer. Topologically, residues 611 to 637 (LLEALYLFLTARNLMVVNYSSINRFTK) are cytoplasmic. Residues 638 to 658 (KLMFPVAYGVPAVTVAISAAS) form a helical membrane-spanning segment. The Extracellular portion of the chain corresponds to 659-676 (RPHLYGTPSRCWLQPEKG). A helical membrane pass occupies residues 677–697 (FIWGFLGPVCAIFSVNLALLL). Over 698–728 (VTLWILKNRLSSLNNEVSTLQNTRMLAFKAT) the chain is Cytoplasmic. A helical transmembrane segment spans residues 729 to 749 (AQLFILGCTWCLGILQVGPAA). Over 750 to 753 (RVMA) the chain is Extracellular. A helical transmembrane segment spans residues 754 to 774 (YLFTIINSLQGVFIFLVYCLL). The Cytoplasmic portion of the chain corresponds to 775–822 (SQQVREQYRKWSKGFRKLRTESEMHTLSSSAKRDTPKPSTPGLLGLQS). Residues 797-822 (EMHTLSSSAKRDTPKPSTPGLLGLQS) are disordered.

Belongs to the G-protein coupled receptor 2 family. Adhesion G-protein coupled receptor (ADGR) subfamily. Forms a heterodimer, consisting of a large extracellular region non-covalently linked to a seven-transmembrane moiety. Interacts with chondroitin sulfate; the interaction with chondroitin sulfate is calcium-dependent. Interacts with CD55. In terms of processing, autoproteolytically cleaved into 2 subunits, an extracellular alpha subunit and a seven-transmembrane beta subunit.

It is found in the cell membrane. It localises to the cell projection. The protein localises to the ruffle membrane. In terms of biological role, cell surface receptor that binds to the chondroitin sulfate moiety of glycosaminoglycan chains and promotes cell attachment. Promotes granulocyte chemotaxis, degranulation and adhesion. In macrophages, promotes the release of inflammatory cytokines, including IL8 and TNF. Signals probably through G-proteins. This chain is Adhesion G protein-coupled receptor E2 (ADGRE2), found in Macaca mulatta (Rhesus macaque).